A 116-amino-acid polypeptide reads, in one-letter code: Large ribosomal subunit protein uL18 (116 aa).

The protein belongs to the universal ribosomal protein uL18 family. Part of the 50S ribosomal subunit; part of the 5S rRNA/L5/L18/L25 subcomplex. Contacts the 5S and 23S rRNAs.

This is one of the proteins that bind and probably mediate the attachment of the 5S RNA into the large ribosomal subunit, where it forms part of the central protuberance. This chain is Large ribosomal subunit protein uL18, found in Pseudoalteromonas translucida (strain TAC 125).